The following is a 277-amino-acid chain: Anamorsin homolog (277 aa).

Residues 1–160 (MDTKRMLQNS…NIGSSFALKK (160 aa)) form an N-terminal SAM-like domain region. A linker region spans residues 161–188 (SIKSPVKVQNDDYSDLIDEDSLLTEEDL). [2Fe-2S] cluster-binding residues include Cys-199, Cys-208, Cys-211, and Cys-213. The segment at 199–213 (CEVGSTRKACKNCTC) is fe-S binding site A. [4Fe-4S] cluster contacts are provided by Cys-238, Cys-241, Cys-249, and Cys-252. 2 consecutive short sequence motifs (cx2C motif) follow at residues 238-241 (CGSC) and 249-252 (CGTC). The fe-S binding site B stretch occupies residues 238 to 252 (CGSCGLGDAFRCGTC).

The protein belongs to the anamorsin family. In terms of assembly, monomer. Requires [2Fe-2S] cluster as cofactor. It depends on [4Fe-4S] cluster as a cofactor.

The protein resides in the cytoplasm. It is found in the mitochondrion intermembrane space. In terms of biological role, component of the cytosolic iron-sulfur (Fe-S) protein assembly (CIA) machinery. Required for the maturation of extramitochondrial Fe-S proteins. Part of an electron transfer chain functioning in an early step of cytosolic Fe-S biogenesis, facilitating the de novo assembly of a [4Fe-4S] cluster on the cytosolic Fe-S scaffold complex. Electrons are transferred from NADPH via a FAD- and FMN-containing diflavin oxidoreductase. Together with the diflavin oxidoreductase, also required for the assembly of the diferric tyrosyl radical cofactor of ribonucleotide reductase (RNR), probably by providing electrons for reduction during radical cofactor maturation in the catalytic small subunit. In Populus trichocarpa (Western balsam poplar), this protein is Anamorsin homolog.